A 202-amino-acid polypeptide reads, in one-letter code: LexA repressor (202 aa).

Residues 28–48 constitute a DNA-binding region (H-T-H motif); the sequence is RAEIAQRLGFRSPNAAEEHLK. Catalysis depends on for autocatalytic cleavage activity residues Ser119 and Lys156.

It belongs to the peptidase S24 family. In terms of assembly, homodimer.

The enzyme catalyses Hydrolysis of Ala-|-Gly bond in repressor LexA.. Functionally, represses a number of genes involved in the response to DNA damage (SOS response), including recA and lexA. Binds to the 16 bp palindromic sequence 5'-CTGTATATATATACAG-3'. In the presence of single-stranded DNA, RecA interacts with LexA causing an autocatalytic cleavage which disrupts the DNA-binding part of LexA, leading to derepression of the SOS regulon and eventually DNA repair. The sequence is that of LexA repressor from Cronobacter sakazakii (strain ATCC BAA-894) (Enterobacter sakazakii).